The chain runs to 215 residues: Vesicle-trafficking protein SEC22b (215 aa).

Over 1-194 (MVLLTMIARV…KYLNMRSTYA (194 aa)) the chain is Cytoplasmic. The region spanning 6–119 (MIARVADGLP…YSFIEFDTFI (114 aa)) is the Longin domain. The residue at position 38 (lysine 38) is an N6-acetyllysine. The region spanning 134–194 (NLGSINTELQ…KYLNMRSTYA (61 aa)) is the v-SNARE coiled-coil homology domain. At serine 137 the chain carries Phosphoserine. Phosphothreonine is present on threonine 140. A phosphoserine mark is found at serine 164, serine 168, serine 174, and serine 177. Residues 195-215 (KLAAVAVFFIMLIVYVRFWWL) traverse the membrane as a helical; Anchor for type IV membrane protein segment.

This sequence belongs to the synaptobrevin family. As to quaternary structure, interacts with STX17. Component of two distinct SNARE complexes consisting of STX5, GOSR2/BOS1, BET1 and SEC22B or STX18, USE1L, BNIP1/SEC20L and SEC22B. YKT6 can probably replace SEC22B as subunit of either complex. Interacts with the COPII Sec23/24 complex composed of SEC23A and SEC24A; recruits SEC22B into COPII-coated vesicles to allow its transport from the endoplasmic reticulum to the Golgi. Interacts with BET1.

It localises to the endoplasmic reticulum membrane. Its subcellular location is the endoplasmic reticulum-Golgi intermediate compartment membrane. The protein localises to the golgi apparatus. The protein resides in the cis-Golgi network membrane. It is found in the trans-Golgi network membrane. It localises to the melanosome. In terms of biological role, SNARE involved in targeting and fusion of ER-derived transport vesicles with the Golgi complex as well as Golgi-derived retrograde transport vesicles with the ER. The sequence is that of Vesicle-trafficking protein SEC22b (Sec22b) from Cricetulus griseus (Chinese hamster).